The chain runs to 250 residues: Petrobactin import ATP-binding protein FatE (250 aa).

The ABC transporter domain maps to 2–236 (IKIDNVKKFY…TLLTDIFETR (235 aa)). ATP is bound at residue 34–41 (GPNGAGKS).

The protein belongs to the ABC transporter superfamily. The complex is composed of two ATP-binding proteins (FatE), two transmembrane proteins (FatC and FatD) and a solute-binding protein (FpuA).

Its subcellular location is the cell membrane. It carries out the reaction a Fe(III)-siderophore(out) + ATP + H2O = a Fe(III)-siderophore(in) + ADP + phosphate + H(+). Part of an ABC transporter complex involved in ferric-petrobactin uptake. Probably responsible for energy coupling to the transport system. This chain is Petrobactin import ATP-binding protein FatE, found in Bacillus anthracis.